The primary structure comprises 852 residues: Taste receptor type 1 member 3 (852 aa).

The signal sequence occupies residues 1-20; it reads MLGPAVLGLSLWALLHPGTG. Residues 21 to 570 lie on the Extracellular side of the membrane; that stretch reads APLCLSQQLR…FLAWGEPAVL (550 aa). N-linked (GlcNAc...) asparagine glycans are attached at residues N85, N130, N264, N285, N380, N411, N432, and N475. The segment at 536–545 is required for brazzein responsiveness; it reads IACTFCGQDE. Residues 571–591 form a helical membrane-spanning segment; sequence LLLLLLSLALGLVLAALGLFV. Over 592-603 the chain is Cytoplasmic; that stretch reads HHRDSPLVQASG. Residues 604–624 traverse the membrane as a helical segment; the sequence is GPLACFGLVCLGLVCLSVLLF. Over 625 to 639 the chain is Extracellular; the sequence is PGQPSPARCLAQQPL. Residues 640-660 traverse the membrane as a helical segment; that stretch reads SHLPLTGCLSTLFLQAAEIFV. Residues 661 to 682 lie on the Cytoplasmic side of the membrane; sequence ESELPLSWADRLSGCLRGPWAW. A helical membrane pass occupies residues 683–703; sequence LVVLLAMLVEVALCTWYLVAF. At 704–729 the chain is on the extracellular side; sequence PPEVVTDWHMLPTEALVHCRTRSWVS. Residues 730–750 traverse the membrane as a helical segment; that stretch reads FGLAHATNATLAFLCFLGTFL. At 751 to 762 the chain is on the cytoplasmic side; that stretch reads VRSQPGCYNRAR. A helical transmembrane segment spans residues 763 to 783; it reads GLTFAMLAYFITWVSFVPLLA. The Extracellular segment spans residues 784-789; that stretch reads NVQVVL. The helical transmembrane segment at 790–810 threads the bilayer; that stretch reads RPAVQMGALLLCVLGILAAFH. Over 811-852 the chain is Cytoplasmic; it reads LPRCYLLMRQPGLNTPEFFLGGGPGDAQGQNDGNTGNQGKHE.

The protein belongs to the G-protein coupled receptor 3 family. TAS1R subfamily. In terms of assembly, forms homodimers or heterodimers with TAS1R1 and TAS1R2.

It localises to the cell membrane. Its function is as follows. Putative taste receptor. TAS1R1/TAS1R3 responds to the umami taste stimulus (the taste of monosodium glutamate). TAS1R2/TAS1R3 recognizes diverse natural and synthetic sweeteners. TAS1R3 is essential for the recognition and response to the disaccharide trehalose. Sequence differences within and between species can significantly influence the selectivity and specificity of taste responses. The polypeptide is Taste receptor type 1 member 3 (TAS1R3) (Homo sapiens (Human)).